A 131-amino-acid chain; its full sequence is Small ribosomal subunit protein uS8 (131 aa).

This sequence belongs to the universal ribosomal protein uS8 family. Part of the 30S ribosomal subunit. Contacts proteins S5 and S12.

In terms of biological role, one of the primary rRNA binding proteins, it binds directly to 16S rRNA central domain where it helps coordinate assembly of the platform of the 30S subunit. In Bordetella parapertussis (strain 12822 / ATCC BAA-587 / NCTC 13253), this protein is Small ribosomal subunit protein uS8.